Here is a 361-residue protein sequence, read N- to C-terminus: MSKRAFNFCAGPAALPEAVLLRAQAELLDWHGKGLSVMEMSHRSDEFVSIATKAEQDLRDLLSIPSNYKVLFLQGGASQQFAQIALNLLPENGKADYIDTGIWSQKAIDEASRYGAINVAASAKAYDYFAIPGQNEWKLSKDAAYVHYAPNETIGGLEFNWIPETGDVPLVADMSSDILSRPLDISRFGMIYAGAQKNIGPSGIVVVIIREDLLGRARSLCPTMLDYKVAADNGSMYNTPPTLAWYLSGLVFEWLKEQGGVEAIGKRNEIKQRTLYDFIDASELYSNPINKPDRSWMNVPFRLADDRLDKPFLAGADANGLLNLKGHRSVGGMRASIYNAIDINAINALVAYMKDFEKEHG.

L-glutamate is bound at residue R43. Pyridoxal 5'-phosphate contacts are provided by residues 77–78 (AS), W103, T153, D173, and Q196. K197 is modified (N6-(pyridoxal phosphate)lysine). Position 238 to 239 (238 to 239 (NT)) interacts with pyridoxal 5'-phosphate.

This sequence belongs to the class-V pyridoxal-phosphate-dependent aminotransferase family. SerC subfamily. In terms of assembly, homodimer. The cofactor is pyridoxal 5'-phosphate.

The protein resides in the cytoplasm. The enzyme catalyses O-phospho-L-serine + 2-oxoglutarate = 3-phosphooxypyruvate + L-glutamate. It carries out the reaction 4-(phosphooxy)-L-threonine + 2-oxoglutarate = (R)-3-hydroxy-2-oxo-4-phosphooxybutanoate + L-glutamate. The protein operates within amino-acid biosynthesis; L-serine biosynthesis; L-serine from 3-phospho-D-glycerate: step 2/3. It functions in the pathway cofactor biosynthesis; pyridoxine 5'-phosphate biosynthesis; pyridoxine 5'-phosphate from D-erythrose 4-phosphate: step 3/5. Its function is as follows. Catalyzes the reversible conversion of 3-phosphohydroxypyruvate to phosphoserine and of 3-hydroxy-2-oxo-4-phosphonooxybutanoate to phosphohydroxythreonine. The protein is Phosphoserine aminotransferase of Pseudomonas syringae pv. syringae (strain B728a).